Consider the following 642-residue polypeptide: Kinesin-like protein KIN-7L (642 aa).

Residues 3-337 (KISVAVRFRP…LQFASRAKCV (335 aa)) form the Kinesin motor domain. Positions 12–27 (PPTTAAPAADQSPSST) are enriched in low complexity. Residues 12-33 (PPTTAAPAADQSPSSTGGDREW) form a disordered region. 94 to 101 (GQTSSGKT) lines the ATP pocket. Coiled-coil stretches lie at residues 343–428 (VNEI…SNTS) and 540–612 (RQQL…FSQA).

This sequence belongs to the TRAFAC class myosin-kinesin ATPase superfamily. Kinesin family. KIN-7 subfamily.

This Oryza sativa subsp. japonica (Rice) protein is Kinesin-like protein KIN-7L.